A 392-amino-acid chain; its full sequence is NAC domain-containing protein 58 (392 aa).

Positions 9-173 (LPPGFRFHPT…DWVLCRIYKK (165 aa)) constitute an NAC domain. The segment at 317 to 345 (STSAGAVVEPPAVTGKRKRSSDGGEPTIQ) is disordered.

As to expression, expressed in leaves, nodes, internodes and mature seeds. Highly expressed in roots. Expressed in leaf sheaths, flag leaves and inflorescences. Expressed in primary and lateral roots, particularly in the vascular tissues. Expressed in the primary phloem of the culm and leaf sheaths. Expressed principally in the primary phloem and in the peripheral zone of the leaf vascular bundles. Expressed in the floral tissues.

It localises to the nucleus. In terms of biological role, transcription factor that acts as a positive regulator of the jasmonate (JA) pathway to mediate leaf senescence. May directly regulate LOX2, AOC, AOS2, AOC1 and OPR7, which are genes involved in the biosynthesis of JA. Regulates positively leaf senescence by directly targeting senescence-associated genes (SAGs) related to chlorophyll degradation, nutrient transport and other genes associated with abscisic acid-induced leaf senescence. Transcription activator that plays a role in mediating abiotic stress responses through the abscisic acid (ABA) pathway. Possesses transcriptional activator activity in yeast. The sequence is that of NAC domain-containing protein 58 from Oryza sativa subsp. japonica (Rice).